Reading from the N-terminus, the 1108-residue chain is TBC1 domain family member 8B (1108 aa).

GRAM domains follow at residues 143-210 (LRFE…ERTS) and 283-351 (QSFR…ELPD). The Rab-GAP TBC domain occupies 469–656 (GVPETLRGEL…NVVDCFFYDG (188 aa)). Residues 822 to 857 (HSRSLARSAFHLLDENGDGLVNFKEFICGLDILYNR) enclose the EF-hand domain. Ca(2+) is bound by residues Asp835, Asn837, Asp839, and Glu846. Positions 961–1059 (GRKLQDSSPQ…PTDTPSSPCT (99 aa)) are disordered. The span at 967–998 (SSPQKTPQTTPTSTSQPESSPTKPTSPESETP) shows a compositional bias: low complexity. Polar residues predominate over residues 1010 to 1024 (SPVSQHETAPSHSDI). The span at 1025–1057 (TPNSTSHPSTPTSSPTETSSPVLDTPTDTPSSP) shows a compositional bias: low complexity.

It localises to the cytoplasm. Its subcellular location is the cytosol. Involved in vesicular recycling, probably as a GTPase-activating protein for Rab family protein(s). The protein is TBC1 domain family member 8B (tbc1d8b) of Danio rerio (Zebrafish).